The sequence spans 137 residues: Nucleoside diphosphate kinase (137 aa).

Residues Lys9, Phe57, Arg85, Thr91, Arg102, and Asn112 each coordinate ATP. The active-site Pros-phosphohistidine intermediate is the His115.

It belongs to the NDK family. As to quaternary structure, homotetramer. Mg(2+) is required as a cofactor.

It localises to the cytoplasm. The enzyme catalyses a 2'-deoxyribonucleoside 5'-diphosphate + ATP = a 2'-deoxyribonucleoside 5'-triphosphate + ADP. The catalysed reaction is a ribonucleoside 5'-diphosphate + ATP = a ribonucleoside 5'-triphosphate + ADP. In terms of biological role, major role in the synthesis of nucleoside triphosphates other than ATP. The ATP gamma phosphate is transferred to the NDP beta phosphate via a ping-pong mechanism, using a phosphorylated active-site intermediate. The polypeptide is Nucleoside diphosphate kinase (Pelobacter propionicus (strain DSM 2379 / NBRC 103807 / OttBd1)).